Consider the following 185-residue polypeptide: MKLKPVLYLLMLLGCLGLKSAHAATLAHGISASWHSFSQTWNEPQTFDPYIPSIIWHNRWTYDADKIDKYNERPWGAGGGVSHFDKKGNWNGIYLMAFKDSFNKWELISGYGWEKTWRPLRDPDFHLGLGYTAGVTMRDNWSYIPIPVLLPLASIGYEYVSFQMTYIPGTYNNGNVYFAWLRWQL.

Positions 1-14 are cleaved as a signal peptide; it reads MKLKPVLYLLMLLG. Cys15 carries the N-palmitoyl cysteine lipid modification. Cys15 carries S-diacylglycerol cysteine lipidation. Active-site residues include His57, Asp100, and Ser101.

This sequence belongs to the lipid A palmitoyltransferase family. Homodimer.

It is found in the cell outer membrane. It catalyses the reaction a lipid A + a 1,2-diacyl-sn-glycero-3-phosphocholine = a hepta-acyl lipid A + a 2-acyl-sn-glycero-3-phosphocholine. The enzyme catalyses a lipid IVA + a 1,2-diacyl-sn-glycero-3-phosphocholine = a lipid IVB + a 2-acyl-sn-glycero-3-phosphocholine. The catalysed reaction is a lipid IIA + a 1,2-diacyl-sn-glycero-3-phosphocholine = a lipid IIB + a 2-acyl-sn-glycero-3-phosphocholine. In terms of biological role, transfers a fatty acid residue from the sn-1 position of a phospholipid to the N-linked hydroxyfatty acid chain on the proximal unit of lipid A or its precursors. In Erwinia pyrifoliae (strain DSM 12163 / CIP 106111 / Ep16/96), this protein is Lipid A acyltransferase PagP.